Here is a 624-residue protein sequence, read N- to C-terminus: DNA (cytosine-5)-methyltransferase DRM1 (624 aa).

UBA domains are found at residues 57-100 (RISD…LFNY) and 108-149 (SSKS…LLTY). The tract at residues 160–189 (DMNININDDDDDNLYSLSSDDEEDELNNSS) is disordered. Residues 166–185 (NDDDDDNLYSLSSDDEEDEL) are compositionally biased toward acidic residues. One can recognise a UBA 3 domain in the interval 188-231 (SSNEDRILQALIKMGYLREDAAIAIERCGEDASMEEVVDFICAA). Positions 291–622 (MHRPVPIPDI…EAVRRKARHM (332 aa)) constitute an SAM-dependent MTase DRM-type domain.

Belongs to the class I-like SAM-binding methyltransferase superfamily. DRM-methyltransferase family.

The protein resides in the nucleus. The catalysed reaction is a 2'-deoxycytidine in DNA + S-adenosyl-L-methionine = a 5-methyl-2'-deoxycytidine in DNA + S-adenosyl-L-homocysteine + H(+). In terms of biological role, involved in de novo DNA methylation. Controls asymmetric and CpNpG methylation. Required for FWA gene silencing but not for the maintenance of SUP gene silencing. Functionally redundant to CMT3 to maintain non-CpG methylation. Involved in RNA-directed DNA methylation. The protein is DNA (cytosine-5)-methyltransferase DRM1 (DRM1) of Arabidopsis thaliana (Mouse-ear cress).